The following is a 126-amino-acid chain: Protein ApaG (126 aa).

In terms of domain architecture, ApaG spans 2 to 126 (SALDTSIRVE…FRLATPGLLH (125 aa)).

This Shewanella baltica (strain OS223) protein is Protein ApaG.